A 3016-amino-acid polypeptide reads, in one-letter code: Genome polyprotein (3016 aa).

S2 is subject to N-acetylserine; by host. The tract at residues 2–23 is interaction with STAT1; that stretch reads STLPKPQRKTKRNTNRRPMDVK. An interaction with EIF2AK2/PKR region spans residues 2 to 58; sequence STLPKPQRKTKRNTNRRPMDVKFPGGGQIVGGVYLLPRRGPRLGVRATRKTSERSQP. The segment at 2–59 is interaction with DDX3X; that stretch reads STLPKPQRKTKRNTNRRPMDVKFPGGGQIVGGVYLLPRRGPRLGVRATRKTSERSQPR. The interval 2–75 is disordered; the sequence is STLPKPQRKT…PKARQSQGRH (74 aa). The Cytoplasmic segment spans residues 2–168; it reads STLPKPQRKT…EDGINYATGN (167 aa). 2 consecutive short sequence motifs (nuclear localization signal) follow at residues 5–13 and 38–43; these read PKPQRKTKR and PRRGPR. The segment covering 7–16 has biased composition (basic residues); it reads PQRKTKRNTN. A compositionally biased stretch (low complexity) spans 32–47; that stretch reads GGVYLLPRRGPRLGVR. Position 53 is a phosphoserine; by host (S53). 2 consecutive short sequence motifs (nuclear localization signal) follow at residues 58-64 and 66-71; these read PRGRRQP and PKARQS. Residues S99 and S116 each carry the phosphoserine; by host modification. The important for endoplasmic reticulum and mitochondrial localization stretch occupies residues 112 to 152; it reads PRRRSRNLGKVIDTLTCGFADLMGYIPVVGAPLGGVAAALA. The interval 122-173 is interaction with APOA2; that stretch reads VIDTLTCGFADLMGYIPVVGAPLGGVAAALAHGVRAIEDGINYATGNLPGCS. The important for lipid droplets localization stretch occupies residues 164–167; that stretch reads YATG. The helical transmembrane segment at 169-189 threads the bilayer; sequence LPGCSFSIFLLALLSCLTTPA. Residues 178 to 191 constitute a propeptide, ER anchor for the core protein, removed in mature form by host signal peptidase; that stretch reads LLALLSCLTTPASA. The Lumenal portion of the chain corresponds to 190–358; the sequence is SAVHYRNISG…LEGHWGVIGA (169 aa). N196, N209, N234, and N250 each carry an N-linked (GlcNAc...) asparagine; by host glycan. The tract at residues 265 to 296 is important for fusion; it reads LVGSAAACSALYIGDLCGGVFLVGQLFTFRPR. N305 carries N-linked (GlcNAc...) asparagine; by host glycosylation. Residues 359-379 traverse the membrane as a helical segment; sequence LLYYSMVANWAKVFAVLLLFA. The Lumenal portion of the chain corresponds to 380–727; sequence GVDATTHIGS…WEYIVLAFLV (348 aa). Residues 385–411 are HVR1; it reads THIGSSASATTNRLTSFFSPGSKQNVQ. N-linked (GlcNAc...) (high mannose) asparagine; by host glycosylation is found at N416, N422, and N429. 4 disulfide bridges follow: C428/C552, C451/C458, C486/C494, and C503/C508. The N-linked (GlcNAc...) asparagine; by host glycan is linked to N447. Residues 474 to 478 are HVR2; that stretch reads ANISG. N475 carries an N-linked (GlcNAc...) asparagine; by host glycan. The tract at residues 480–493 is CD81-binding 1; sequence SNDKPYCWHYPPRP. Residue N532 is glycosylated (N-linked (GlcNAc...) asparagine; by host). The interval 544–551 is CD81-binding 2; the sequence is PPRGSWFG. A glycan (N-linked (GlcNAc...) asparagine; by host) is linked at N556. Disulfide bonds link C564–C569, C583–C587, C599–C622, and C609–C646. N-linked (GlcNAc...) (high mannose) asparagine; by host glycosylation is found at N625 and N647. A disulfide bridge links C654 with C679. Positions 662–673 are PKR/eIF2-alpha phosphorylation homology domain (PePHD); the sequence is VEMSPLLFSTTQ. The chain crosses the membrane as a helical span at residues 728 to 748; the sequence is LAVARVCACLWLMFLVGQAEA. The Lumenal segment spans residues 749–759; sequence ALENLIVLNAT. A helical transmembrane segment spans residues 760 to 780; that stretch reads SAAGSQGWVWGVVFICAAWYI. At 781-784 the chain is on the cytoplasmic side; it reads RGRA. The chain crosses the membrane as a helical span at residues 785–805; it reads APITTYAILQLWPLLLLVLAL. At 806 to 815 the chain is on the lumenal side; that stretch reads PRRAYAYNGE. Residues 816 to 836 traverse the membrane as a helical segment; sequence EAASLGMLAIVIITIFTLTPA. Residues 837-883 are Cytoplasmic-facing; the sequence is YKTLLISTLWWIQYYIARAEAMLYVWVPSLQVRGGRDAVILLTCLLH. The helical transmembrane segment at 884–904 threads the bilayer; sequence PQLGFEVTKAILALLGPLYIL. Residues 905–930 are Lumenal-facing; sequence QYSLLKTPYFVRAHILLRVCMFLRGV. The 124-residue stretch at 905-1028 folds into the Peptidase C18 domain; the sequence is QYSLLKTPYF…DIRDGGWRLL (124 aa). The protease NS2-3 stretch occupies residues 906-1208; it reads YSLLKTPYFV…PVENMQSTAR (303 aa). A lipid anchor (S-palmitoyl cysteine; by host) is attached at C924. The helical transmembrane segment at 931–951 threads the bilayer; it reads AGGKYVQAALLRLGAWTGTYI. The tract at residues 931–951 is interaction with host SCPS1; the sequence is AGGKYVQAALLRLGAWTGTYI. At 952 to 1659 the chain is on the cytoplasmic side; it reads YDHLTPLSDW…CMSADLEVIT (708 aa). Residues H954, E974, and C995 each act as for protease NS2 activity; shared with dimeric partner in the active site. Residues 1029–1210 enclose the Peptidase S29 domain; sequence APITAYAQQT…ENMQSTARSP (182 aa). Residues H1085 and D1109 each act as charge relay system; for serine protease NS3 activity in the active site. The Zn(2+) site is built by C1125 and C1127. S1167 functions as the Charge relay system; for serine protease NS3 activity in the catalytic mechanism. The Zn(2+) site is built by C1173 and H1177. The 153-residue stretch at 1219–1371 folds into the Helicase ATP-binding domain; it reads PAVPQTYQVG…PNITEVALSS (153 aa). Residue 1232–1239 participates in ATP binding; that stretch reads APTGSGKS. Mg(2+)-binding residues include S1239 and E1319. Positions 1318–1321 match the DECH box motif; sequence DECH. The segment at 1488–1500 is RNA-binding; it reads QRRGRTGRGKHGV. The chain crosses the membrane as a helical span at residues 1660-1680; the sequence is STWVLVGGVLAALAAYCLSVG. The tract at residues 1681–1692 is NS3-binding; sequence CVVVCGRISTTG. Residues 1681–1807 are Cytoplasmic-facing; that stretch reads CVVVCGRIST…SLTSPLSTST (127 aa). Residues 1808 to 1828 form a helical membrane-spanning segment; it reads TLLLNILGGWVASQLANPTAS. The Lumenal segment spans residues 1829–1830; the sequence is TA. The helical transmembrane segment at 1831 to 1851 threads the bilayer; it reads FVVSGLAGATVGSIGLGRVLV. Position 1852 (D1852) is a topological domain, cytoplasmic. A helical transmembrane segment spans residues 1853–1873; that stretch reads IIAGYGAGVSGALVAFKIMSG. At 1874 to 1883 the chain is on the lumenal side; sequence ETPSAEDMVN. Residues 1884–1904 traverse the membrane as a helical segment; it reads LLPALLSPGALVVGVVCAAIL. The Cytoplasmic portion of the chain corresponds to 1905-1974; sequence RRHAGPAEGA…WINSDWSTPC (70 aa). Residue C1974 is the site of S-palmitoyl cysteine; by host attachment. Residues 1975–2004 lie within the membrane without spanning it; the sequence is SGSWLRDIWDWVCTVLSDFKVWLKSKLVPA. The Cytoplasmic segment spans residues 2005–2995; the sequence is LPGVPFLSCQ…YHSVSRARPR (991 aa). The Zn(2+) site is built by C2013, C2031, C2033, and C2054. Residues 2122–2210 are FKBP8-binding; it reads EFFTEVDGVR…ASSLASQLSA (89 aa). Positions 2122–2335 are transcriptional activation; it reads EFFTEVDGVR…PVPPPRRKSV (214 aa). Positions 2137–2141 are interaction with non-structural protein 4A; the sequence is PACKP. The tract at residues 2191 to 2443 is interaction with host SKP2; sequence RLARGSPPSC…ALVTPCAAEE (253 aa). 6 positions are modified to phosphoserine; by host: S2196, S2199, S2203, S2206, S2209, and S2212. The segment at 2212 to 2251 is ISDR; it reads SLKATCTTHCAHPDADLIEANLLWRQEVGGNITRVESENK. An interaction with EIF2AK2/PKR region spans residues 2212-2277; sequence SLKATCTTHC…REPSVPAECH (66 aa). An NS4B-binding region spans residues 2251-2309; the sequence is KVIVLDSFDPLVPEYDDREPSVPAECHRPNRPKFPPALPIWARPDYNPPLLETWKKPDY. A V3 region spans residues 2302–2379; sequence ETWKKPDYAP…PTTSKSSDQA (78 aa). The SH3-binding motif lies at 2325-2328; the sequence is PPVP. Residues 2330–2338 carry the Nuclear localization signal motif; that stretch reads PRRKSVVHL. K2353 participates in a covalent cross-link: Glycyl lysine isopeptide (Lys-Gly) (interchain with G-Cter in ubiquitin). The interval 2353-2414 is disordered; that stretch reads KSFPTQPAST…PDLSSGSWST (62 aa). Residues 2355–2376 are compositionally biased toward polar residues; the sequence is FPTQPASTPDSDSGHPTTSKSS. S2454 is subject to Phosphoserine; by host. Residues 2639-2757 form the RdRp catalytic domain; sequence PMGFSYDTRC…IAESAGVQED (119 aa). Residues D2645, D2743, and D2744 each coordinate Mg(2+). Residues 2996-3016 traverse the membrane as a helical segment; sequence IFLLCLLLLSVGVGIFLLPAR.

It belongs to the hepacivirus polyprotein family. In terms of assembly, homooligomer. Interacts with E1 (via C-terminus). Interacts with the non-structural protein 5A. Interacts (via N-terminus) with host STAT1 (via SH2 domain); this interaction results in decreased STAT1 phosphorylation and ubiquitin-mediated proteasome-dependent STAT1 degradation, leading to decreased IFN-stimulated gene transcription. Interacts with host STAT3; this interaction constitutively activates STAT3. Interacts with host LTBR receptor. Interacts with host TNFRSF1A receptor and possibly induces apoptosis. Interacts with host HNRPK. Interacts with host YWHAE. Interacts with host UBE3A/E6AP. Interacts with host DDX3X. Interacts with host APOA2. Interacts with host RXRA protein. Interacts with host SP110 isoform 3/Sp110b; this interaction sequesters the transcriptional corepressor SP110 away from the nucleus. Interacts with host CREB3 nuclear transcription protein; this interaction triggers cell transformation. Interacts with host ACY3. Interacts with host C1QR1. Interacts with host RBM24; this interaction, which enhances the interaction of the mature core protein with 5'-UTR, may inhibit viral translation and favor replication. Interacts with host EIF2AK2/PKR; this interaction induces the autophosphorylation of EIF2AK2. Part of the viral assembly initiation complex composed of NS2, E1, E2, NS3, NS4A, NS5A and the mature core protein. As to quaternary structure, forms a heterodimer with envelope glycoprotein E2. Interacts with mature core protein. Interacts with protease NS2. The heterodimer E1/E2 interacts with host CLDN1; this interaction plays a role in viral entry into host cell. Interacts with host SPSB2 (via C-terminus). Part of the viral assembly initiation complex composed of NS2, E1, E2, NS3, NS4A, NS5A and the mature core protein. Interacts with host NEURL3; this interaction prevents E1 binding to glycoprotein E2. Forms a heterodimer with envelope glycoprotein E1. Interacts with host CD81 and SCARB1 receptors; these interactions play a role in viral entry into host cell. Interacts with host EIF2AK2/PKR; this interaction inhibits EIF2AK2 and probably allows the virus to evade the innate immune response. Interacts with host CD209/DC-SIGN and CLEC4M/DC-SIGNR. Interact with host SPCS1; this interaction is essential for viral particle assembly. Interacts with protease NS2. The heterodimer E1/E2 interacts with host CLDN1; this interaction plays a role in viral entry into host cell. Part of the viral assembly initiation complex composed of NS2, E1, E2, NS3, NS4A, NS5A and the mature core protein. Interacts with host SLC3A2/4F2hc; the interaction may facilitate viral entry into host cell. Interacts with human PLSCR1. In terms of assembly, homohexamer. Homoheptamer. Interacts with protease NS2. As to quaternary structure, homodimer. Interacts with host SPCS1; this interaction is essential for viral particle assembly. Interacts with envelope glycoprotein E1. Interacts with envelope glycoprotein E2. Interacts with viroporin p7. Interacts with serine protease/helicase NS3. Part of the replication complex composed of NS2, NS3, NS4A, NS4B, NS5A and the RNA-directed RNA polymerase embedded in an ER-derived membranous web. Part of the viral assembly initiation complex composed of NS2, E1, E2, NS3, NS4A, NS5A and the mature core protein. Interacts with protease NS2. Interacts with non-structural protein 4A; this interaction stabilizes the folding of NS3 serine protease. NS3-NS4A interaction is essential for NS3 activation and allows membrane anchorage of the latter. NS3/NS4A complex also prevents phosphorylation of host IRF3, thus preventing the establishment of dsRNA induced antiviral state. Interacts with host MAVS; this interaction leads to the cleavage and inhibition of host MAVS. Interacts with host TICAM1; this interaction leads to the cleavage and inhibition of host TICAM1. Interacts with host TANK-binding kinase/TBK1; this interaction results in the inhibition of the association between TBK1 and IRF3, which leads to the inhibition of IRF3 activation. Interacts with host RBM24. Part of the replication complex composed of NS2, NS3, NS4A, NS4B, NS5A and the RNA-directed RNA polymerase embedded in an ER-derived membranous web. Part of the viral assembly initiation complex composed of NS2, E1, E2, NS3, NS4A, NS5A and the mature core protein. In terms of assembly, interacts with NS3 serine protease; this interaction stabilizes the folding of NS3 serine protease. NS3-NS4A interaction is essential for NS3 activation and allows membrane anchorage of the latter. Interacts with non-structural protein 5A (via N-terminus). Part of the replication complex composed of NS2, NS3, NS4A, NS4B, NS5A and the RNA-directed RNA polymerase embedded in an ER-derived membranous web. Part of the viral assembly initiation complex composed of NS2, E1, E2, NS3, NS4A, NS5A and the mature core protein. As to quaternary structure, homomultimer. Interacts with non-structural protein NS5A. Interacts with host PLA2G4C; this interaction likely initiates the recruitment of replication complexes to lipid droplets. Interacts with host STING; this interaction disrupts the interaction between STING and TBK1 thereby suppressing the interferon signaling. Part of the replication complex composed of NS2, NS3, NS4A, NS4B, NS5A and the RNA-directed RNA polymerase embedded in an ER-derived membranous web. Monomer. Homodimer; dimerization is required for RNA-binding. Interacts with the mature core protein. Interacts (via N-terminus) with non-structural protein 4A. Interacts with non-structural protein 4B. Interacts (via region D2) with RNA-directed RNA polymerase. Part of the viral assembly initiation complex composed of NS2, E1, E2, NS3, NS4A, NS5A and the mature core protein. Part of the replication complex composed of NS2, NS3, NS4A, NS4B, NS5A and the RNA-directed RNA polymerase embedded in an ER-derived membranous web. Interacts with host GRB2. Interacts with host BIN1. Interacts with host PIK3R1. Interacts with host SRCAP. Interacts with host FKBP8. Interacts (via C-terminus) with host VAPB (via MSP domain). Interacts with host EIF2AK2/PKR; this interaction leads to disruption of EIF2AK2 dimerization by NS5A and probably allows the virus to evade the innate immune response. Interacts (via N-terminus) with host PACSIN2 (via N-terminus); this interaction attenuates protein kinase C alpha-mediated phosphorylation of PACSIN2 by disrupting the interaction between PACSIN2 and PRKCA. Interacts (via N-terminus) with host SRC kinase (via SH2 domain). Interacts with most Src-family kinases. Interacts with host IFI27 and SKP2; promotes the ubiquitin-mediated proteasomal degradation of NS5A. Interacts with host GPS2. Interacts with host TNFRSF21; this interaction allows the modulation by the virus of JNK, p38 MAPK, STAT3, and Akt signaling pathways in a DR6-dependent manner. Interacts (via N-terminus) with host CIDEB (via N-terminus); this interaction seems to regulate the association of HCV particles with APOE. Interacts with host CHKA/Choline Kinase-alpha; CHKA bridges host PI4KA and NS5A and potentiates NS5A-stimulated PI4KA activity, which then facilitates the targeting of the ternary complex to the ER for viral replication. Interacts with host SPSB2 (via C-terminus); this interaction targets NS5A for ubiquitination and degradation. Interacts with host RAB18; this interaction may promote the association of NS5A and other replicase components with lipid droplets. Interacts (via region D2) with host PPIA/CYPA; the interaction stimulates RNA-binding ability of NS5A and is dependent on the peptidyl-prolyl cis-trans isomerase activity of PPIA/CYPA. Interacts with host TRIM14; this interaction induces the degradation of NS5A. In terms of assembly, homooligomer. Interacts with non-structural protein 5A. Interacts with host VAPB. Interacts with host PRK2/PKN2. Interacts with host HNRNPA1 and SEPT6; these interactions facilitate viral replication. Part of the replication complex composed of NS2, NS3, NS4A, NS4B, NS5A and the RNA-directed RNA polymerase. Requires Zn(2+) as cofactor. Mg(2+) serves as cofactor. In terms of processing, specific enzymatic cleavages in vivo yield mature proteins. The structural proteins, core, E1, E2 and p7 are produced by proteolytic processing by host signal peptidases. The core protein precursor is synthesized as a 23 kDa, which is retained in the ER membrane through the hydrophobic signal peptide. Cleavage by the signal peptidase releases the 21 kDa mature core protein. The cleavage of the core protein precursor occurs between aminoacids 176 and 188 but the exact cleavage site is not known. Some degraded forms of the core protein appear as well during the course of infection. The other proteins (p7, NS2, NS3, NS4A, NS4B, NS5A and NS5B) are cleaved by the viral proteases. Autoprocessing between NS2 and NS3 is mediated by the NS2 cysteine protease catalytic domain and regulated by the NS3 N-terminal domain. Post-translationally, phosphorylated by host PKC and PKA. Ubiquitinated; mediated by UBE3A and leading to core protein subsequent proteasomal degradation. In terms of processing, highly N-glycosylated. Post-translationally, palmitoylation is required for NS2/3 autoprocessing and E2 recruitment to membranes. Palmitoylated. This modification may play a role in its polymerization or in protein-protein interactions. In terms of processing, phosphorylated on serines in a basal form termed p56. p58 is a hyperphosphorylated form of p56. p56 and p58 coexist in the cell in roughly equivalent amounts. Hyperphosphorylation is dependent on the presence of NS4A. Host CSNK1A1/CKI-alpha or RPS6KB1 kinases may be responsible for NS5A phosphorylation. Post-translationally, tyrosine phosphorylation is essential for the interaction with host SRC. Ubiquitinated. Ubiquitination, most probably at Lys-2353, mediated by host IFI27 and SKP2 leads to proteasomal degradation, restricting viral infection. Ubiquitination by host TRIM22 leads to interruption of viral replication. In terms of processing, the N-terminus is phosphorylated by host PRK2/PKN2.

The protein localises to the host endoplasmic reticulum membrane. Its subcellular location is the host mitochondrion membrane. It localises to the virion. The protein resides in the host cytoplasm. It is found in the host nucleus. The protein localises to the host lipid droplet. Its subcellular location is the virion membrane. It localises to the host mitochondrion. The protein resides in the host cell membrane. It is found in the host perinuclear region. It catalyses the reaction Hydrolysis of four peptide bonds in the viral precursor polyprotein, commonly with Asp or Glu in the P6 position, Cys or Thr in P1 and Ser or Ala in P1'.. The enzyme catalyses a ribonucleoside 5'-triphosphate + H2O = a ribonucleoside 5'-diphosphate + phosphate + H(+). The catalysed reaction is ATP + H2O = ADP + phosphate + H(+). It carries out the reaction RNA(n) + a ribonucleoside 5'-triphosphate = RNA(n+1) + diphosphate. Its activity is regulated as follows. Inhibited by the antiviral drug hexamethylene amiloride. Inhibition by amantadine appears to be genotype-dependent. Also inhibited by long-alkyl-chain iminosugar derivatives. Activity is up-regulated by PRK2/PKN2-mediated phosphorylation. Functionally, packages viral RNA to form a viral nucleocapsid, and promotes virion budding. Participates in the viral particle production as a result of its interaction with the non-structural protein 5A. Binds RNA and may function as a RNA chaperone to induce the RNA structural rearrangements taking place during virus replication. Modulates viral translation initiation by interacting with viral IRES and 40S ribosomal subunit. Affects various cell signaling pathways, host immunity and lipid metabolism. Prevents the establishment of cellular antiviral state by blocking the interferon-alpha/beta (IFN-alpha/beta) and IFN-gamma signaling pathways and by blocking the formation of phosphorylated STAT1 and promoting ubiquitin-mediated proteasome-dependent degradation of STAT1. Activates STAT3 leading to cellular transformation. Regulates the activity of cellular genes, including c-myc and c-fos. May repress the promoter of p53, and sequester CREB3 and SP110 isoform 3/Sp110b in the cytoplasm. Represses cell cycle negative regulating factor CDKN1A, thereby interrupting an important check point of normal cell cycle regulation. Targets transcription factors involved in the regulation of inflammatory responses and in the immune response: suppresses TNF-induced NF-kappa-B activation, and activates AP-1. Binds to dendritic cells (DCs) via C1QR1, resulting in down-regulation of T-lymphocytes proliferation. Alters lipid metabolism by interacting with hepatocellular proteins involved in lipid accumulation and storage. Induces up-regulation of FAS promoter activity, and thereby contributes to the increased triglyceride accumulation in hepatocytes (steatosis). In terms of biological role, forms a heterodimer with envelope glycoprotein E2, which mediates virus attachment to the host cell, virion internalization through clathrin-dependent endocytosis and fusion with host membrane. Fusion with the host cell is most likely mediated by both E1 and E2, through conformational rearrangements of the heterodimer required for fusion rather than a classical class II fusion mechanism. E1/E2 heterodimer binds host apolipoproteins such as APOB and ApoE thereby forming a lipo-viro-particle (LVP). APOE associated to the LVP allows the initial virus attachment to cell surface receptors such as the heparan sulfate proteoglycans (HSPGs), syndecan-1 (SDC1), syndecan-1 (SDC2), the low-density lipoprotein receptor (LDLR) and scavenger receptor class B type I (SCARB1). The cholesterol transfer activity of SCARB1 allows E2 exposure and binding of E2 to SCARB1 and the tetraspanin CD81. E1/E2 heterodimer binding on CD81 activates the epithelial growth factor receptor (EGFR) signaling pathway. Diffusion of the complex E1-E2-EGFR-SCARB1-CD81 to the cell lateral membrane allows further interaction with Claudin 1 (CLDN1) and occludin (OCLN) to finally trigger HCV entry. Its function is as follows. Forms a heterodimer with envelope glycoprotein E1, which mediates virus attachment to the host cell, virion internalization through clathrin-dependent endocytosis and fusion with host membrane. Fusion with the host cell is most likely mediated by both E1 and E2, through conformational rearrangements of the heterodimer required for fusion rather than a classical class II fusion mechanism. The interaction between envelope glycoprotein E2 and host apolipoprotein E/APOE allows the proper assembly, maturation and infectivity of the viral particles. This interaction is probably promoted via the up-regulation of cellular autophagy by the virus. E1/E2 heterodimer binds host apolipoproteins such as APOB and APOE thereby forming a lipo-viro-particle (LVP). APOE associated to the LVP allows the initial virus attachment to cell surface receptors such as the heparan sulfate proteoglycans (HSPGs), syndecan-1 (SDC1), syndecan-1 (SDC2), the low-density lipoprotein receptor (LDLR) and scavenger receptor class B type I (SCARB1). The cholesterol transfer activity of SCARB1 allows E2 exposure and binding of E2 to SCARB1 and the tetraspanin CD81. E1/E2 heterodimer binding on CD81 activates the epithelial growth factor receptor (EGFR) signaling pathway. Diffusion of the complex E1-E2-EGFR-SCARB1-CD81 to the cell lateral membrane allows further interaction with Claudin 1 (CLDN1) and occludin (OCLN) to finally trigger HCV entry. Inhibits host EIF2AK2/PKR activation, preventing the establishment of an antiviral state. Viral ligand for CD209/DC-SIGN and CLEC4M/DC-SIGNR, which are respectively found on dendritic cells (DCs), and on liver sinusoidal endothelial cells and macrophage-like cells of lymph node sinuses. These interactions allow the capture of circulating HCV particles by these cells and subsequent facilitated transmission to permissive cells such as hepatocytes and lymphocyte subpopulations. The interaction between E2 and host amino acid transporter complex formed by SLC3A2 and SLC7A5/LAT1 may facilitate viral entry into host cell. Ion channel protein that acts as a viroporin and plays an essential role in the assembly, envelopment and secretion of viral particles. Regulates the host cell secretory pathway, which induces the intracellular retention of viral glycoproteins and favors assembly of viral particles. Creates a pore in acidic organelles and releases Ca(2+) and H(+) in the cytoplasm of infected cells, leading to a productive viral infection. High levels of cytoplasmic Ca(2+) may trigger membrane trafficking and transport of viral ER-associated proteins to viroplasms, sites of viral genome replication. This ionic imbalance induces the assembly of the inflammasome complex, which triggers the maturation of pro-IL-1beta into IL-1beta through the action of caspase-1. Targets also host mitochondria and induces mitochondrial depolarization. In addition of its role as a viroporin, acts as a lipid raft adhesion factor. Functionally, cysteine protease required for the proteolytic auto-cleavage between the non-structural proteins NS2 and NS3. The N-terminus of NS3 is required for the function of NS2 protease (active region NS2-3). Promotes the initiation of viral particle assembly by mediating the interaction between structural and non-structural proteins. In terms of biological role, displays three enzymatic activities: serine protease with a chymotrypsin-like fold, NTPase and RNA helicase. NS3 serine protease, in association with NS4A, is responsible for the cleavages of NS3-NS4A, NS4A-NS4B, NS4B-NS5A and NS5A-NS5B. The NS3/NS4A complex prevents phosphorylation of host IRF3, thus preventing the establishment of dsRNA induced antiviral state. The NS3/NS4A complex induces host amino acid transporter component SLC3A2, thus contributing to HCV propagation. NS3 RNA helicase binds to RNA and unwinds both dsDNA and dsRNA in the 3' to 5' direction, and likely resolves RNA complicated stable secondary structures in the template strand. Binds a single ATP and catalyzes the unzipping of a single base pair of dsRNA. Inhibits host antiviral proteins TBK1 and IRF3 thereby preventing the establishment of an antiviral state. Cleaves host MAVS/CARDIF thereby preventing the establishment of an antiviral state. Cleaves host TICAM1/TRIF, thereby disrupting TLR3 signaling and preventing the establishment of an antiviral state. Its function is as follows. Peptide cofactor which forms a non-covalent complex with the N-terminal of NS3 serine protease. The NS3/NS4A complex prevents phosphorylation of host IRF3, thus preventing the establishment of dsRNA induced antiviral state. The NS3/NS4A complex induces host amino acid transporter component SLC3A2, thus contributing to HCV propagation. Induces a specific membrane alteration that serves as a scaffold for the virus replication complex. This membrane alteration gives rise to the so-called ER-derived membranous web that contains the replication complex. NS4B self-interaction contributes to its function in membranous web formation. Promotes host TRIF protein degradation in a CASP8-dependent manner thereby inhibiting host TLR3-mediated interferon signaling. Disrupts the interaction between STING and TBK1 contributing to the inhibition of interferon signaling. Functionally, phosphorylated protein that is indispensable for viral replication and assembly. Both hypo- and hyperphosphorylated states are required for the viral life cycle. The hyperphosphorylated form of NS5A is an inhibitor of viral replication. Involved in RNA-binding and especially in binding to the viral genome. Zinc is essential for RNA-binding. Participates in the viral particle production as a result of its interaction with the mature viral core protein. Its interaction with host VAPB may target the viral replication complex to vesicles. Down-regulates viral IRES translation initiation. Mediates interferon resistance, presumably by interacting with and inhibiting host EIF2AK2/PKR. Prevents BIN1-induced apoptosis. Acts as a transcriptional activator of some host genes important for viral replication when localized in the nucleus. Via the interaction with host PACSIN2, modulates lipid droplet formation in order to promote virion assembly. Modulates TNFRSF21/DR6 signaling pathway for viral propagation. In terms of biological role, RNA-dependent RNA polymerase that performs primer-template recognition and RNA synthesis during viral replication. Initiates RNA transcription/replication at a flavin adenine dinucleotide (FAD), resulting in a 5'- FAD cap on viral RNAs. In this way, recognition of viral 5' RNA by host pattern recognition receptors can be bypassed, thereby evading activation of antiviral pathways. This Hepatitis C virus genotype 6k (isolate VN405) (HCV) protein is Genome polyprotein.